The primary structure comprises 48 residues: Sulfide dehydrogenase [flavocytochrome c] flavoprotein chain (48 aa).

FAD is bound at residue 40–46; that stretch reads VTCPFSN.

In terms of assembly, dimer of one cytochrome and one flavoprotein.

It is found in the periplasm. The catalysed reaction is hydrogen sulfide + 2 Fe(III)-[cytochrome c] = sulfur + 2 Fe(II)-[cytochrome c] + H(+). This chain is Sulfide dehydrogenase [flavocytochrome c] flavoprotein chain, found in Chlorobaculum thiosulfatiphilum (Chlorobium limicola f.sp. thiosulfatophilum).